A 100-amino-acid polypeptide reads, in one-letter code: Cell division topological specificity factor (100 aa).

It belongs to the MinE family.

Its function is as follows. Prevents the cell division inhibition by proteins MinC and MinD at internal division sites while permitting inhibition at polar sites. This ensures cell division at the proper site by restricting the formation of a division septum at the midpoint of the long axis of the cell. The sequence is that of Cell division topological specificity factor from Synechococcus sp. (strain JA-2-3B'a(2-13)) (Cyanobacteria bacterium Yellowstone B-Prime).